We begin with the raw amino-acid sequence, 485 residues long: N-acetylglucosaminyltransferase (485 aa).

Belongs to the NodC/HAS family.

The protein localises to the cell membrane. Functionally, may be involved in the synthesis of NodRm-1, a sulfated N-acyl-beta-1,4-tetrasaccharide of N-acetylglucosamine which initiates a series of events in the host plant species leading eventually to nodulation. The sequence is that of N-acetylglucosaminyltransferase (nodC) from Bradyrhizobium diazoefficiens (strain JCM 10833 / BCRC 13528 / IAM 13628 / NBRC 14792 / USDA 110).